We begin with the raw amino-acid sequence, 150 residues long: Large ribosomal subunit protein bL9 (150 aa).

It belongs to the bacterial ribosomal protein bL9 family.

In terms of biological role, binds to the 23S rRNA. This chain is Large ribosomal subunit protein bL9, found in Buchnera aphidicola subsp. Schizaphis graminum (strain Sg).